A 116-amino-acid polypeptide reads, in one-letter code: Aspartate 1-decarboxylase (116 aa).

Residue S25 is the Schiff-base intermediate with substrate; via pyruvic acid of the active site. Position 25 is a pyruvic acid (Ser) (S25). T57 contributes to the substrate binding site. The Proton donor role is filled by Y58. Substrate is bound at residue 73–75 (GAA).

This sequence belongs to the PanD family. Heterooctamer of four alpha and four beta subunits. The cofactor is pyruvate. In terms of processing, is synthesized initially as an inactive proenzyme, which is activated by self-cleavage at a specific serine bond to produce a beta-subunit with a hydroxyl group at its C-terminus and an alpha-subunit with a pyruvoyl group at its N-terminus.

Its subcellular location is the cytoplasm. The catalysed reaction is L-aspartate + H(+) = beta-alanine + CO2. The protein operates within cofactor biosynthesis; (R)-pantothenate biosynthesis; beta-alanine from L-aspartate: step 1/1. In terms of biological role, catalyzes the pyruvoyl-dependent decarboxylation of aspartate to produce beta-alanine. The sequence is that of Aspartate 1-decarboxylase from Syntrophus aciditrophicus (strain SB).